The following is a 267-amino-acid chain: Probable 3-methyl-2-oxobutanoate hydroxymethyltransferase (267 aa).

The protein belongs to the PanB family.

It catalyses the reaction 3-methyl-2-oxobutanoate + (6R)-5,10-methylene-5,6,7,8-tetrahydrofolate + H2O = 2-dehydropantoate + (6S)-5,6,7,8-tetrahydrofolate. It functions in the pathway cofactor biosynthesis; (R)-pantothenate biosynthesis; (R)-pantoate from 3-methyl-2-oxobutanoate: step 1/2. The polypeptide is Probable 3-methyl-2-oxobutanoate hydroxymethyltransferase (Schizosaccharomyces pombe (strain 972 / ATCC 24843) (Fission yeast)).